Reading from the N-terminus, the 349-residue chain is S-adenosylmethionine:tRNA ribosyltransferase-isomerase (349 aa).

This sequence belongs to the QueA family. As to quaternary structure, monomer.

Its subcellular location is the cytoplasm. It catalyses the reaction 7-aminomethyl-7-carbaguanosine(34) in tRNA + S-adenosyl-L-methionine = epoxyqueuosine(34) in tRNA + adenine + L-methionine + 2 H(+). Its pathway is tRNA modification; tRNA-queuosine biosynthesis. Transfers and isomerizes the ribose moiety from AdoMet to the 7-aminomethyl group of 7-deazaguanine (preQ1-tRNA) to give epoxyqueuosine (oQ-tRNA). This is S-adenosylmethionine:tRNA ribosyltransferase-isomerase from Cupriavidus pinatubonensis (strain JMP 134 / LMG 1197) (Cupriavidus necator (strain JMP 134)).